A 435-amino-acid chain; its full sequence is 5-methylthioadenosine/S-adenosylhomocysteine deaminase (435 aa).

Zn(2+) contacts are provided by His-65 and His-67. The substrate site is built by Glu-94, Arg-150, and His-189. Residue His-216 participates in Zn(2+) binding. Residues Glu-219 and Asp-304 each coordinate substrate. Asp-304 contacts Zn(2+).

The protein belongs to the metallo-dependent hydrolases superfamily. MTA/SAH deaminase family. It depends on Zn(2+) as a cofactor.

The catalysed reaction is S-adenosyl-L-homocysteine + H2O + H(+) = S-inosyl-L-homocysteine + NH4(+). It carries out the reaction S-methyl-5'-thioadenosine + H2O + H(+) = S-methyl-5'-thioinosine + NH4(+). Catalyzes the deamination of 5-methylthioadenosine and S-adenosyl-L-homocysteine into 5-methylthioinosine and S-inosyl-L-homocysteine, respectively. Is also able to deaminate adenosine. The polypeptide is 5-methylthioadenosine/S-adenosylhomocysteine deaminase (Bacillus cereus (strain B4264)).